Consider the following 65-residue polypeptide: Prokaryotic ubiquitin-like protein Pup (65 aa).

Residues 1-38 (MANAQQQVFGGGGGDDAENNDAPQQGSGTQQVNVTGTD) form a disordered region. Residues 21 to 59 (DAPQQGSGTQQVNVTGTDDLLDEIDGLLETNAEEFVRSY) are ARC ATPase binding. Residues 22–34 (APQQGSGTQQVNV) are compositionally biased toward polar residues. A Deamidated glutamine modification is found at Q65. Q65 participates in a covalent cross-link: Isoglutamyl lysine isopeptide (Gln-Lys) (interchain with K-? in acceptor proteins).

Belongs to the prokaryotic ubiquitin-like protein family. As to quaternary structure, strongly interacts with the proteasome-associated ATPase ARC through a hydrophobic interface; the interacting region of Pup lies in its C-terminal half. There is one Pup binding site per ARC hexamer ring. In terms of processing, is modified by deamidation of its C-terminal glutamine to glutamate by the deamidase Dop, a prerequisite to the subsequent pupylation process.

It functions in the pathway protein degradation; proteasomal Pup-dependent pathway. Protein modifier that is covalently attached to lysine residues of substrate proteins, thereby targeting them for proteasomal degradation. The tagging system is termed pupylation. The sequence is that of Prokaryotic ubiquitin-like protein Pup from Corynebacterium urealyticum (strain ATCC 43042 / DSM 7109).